We begin with the raw amino-acid sequence, 5162 residues long: Linear gramicidin synthase subunit B (5162 aa).

Carrier domains follow at residues alanine 963–arginine 1038, glutamate 2027–glutamate 2101, alanine 3541–glycine 3616, and alanine 4601–threonine 4675. Serine 998, serine 2062, serine 3576, and serine 4636 each carry O-(pantetheine 4'-phosphoryl)serine.

It belongs to the ATP-dependent AMP-binding enzyme family. In terms of assembly, large multienzyme complex composed of 4 subunits; LgrA, LgrB, LgrC and LgrD. The cofactor is pantetheine 4'-phosphate.

Its function is as follows. Activates the 3rd to 6th amino acids (Ala, D-Leu, Ala and D-Val) in linear gramicidin and catalyzes the formation of the peptide bond between them. This enzyme is also responsible for the epimerization of the 4th (D-Leu) and the 6th (D-Val) amino acids. This Brevibacillus parabrevis protein is Linear gramicidin synthase subunit B (lgrB).